A 754-amino-acid polypeptide reads, in one-letter code: Polyadenylate-binding protein, cytoplasmic and nuclear (754 aa).

Positions 1 to 25 (MSAEVSTTPAADNVNGTPEATNAAA) are enriched in polar residues. Residues 1–52 (MSAEVSTTPAADNVNGTPEATNAAATSAPEVTAVESSSPTSPNNNNQPHSAS) are disordered. Residues 36–46 (SSSPTSPNNNN) are compositionally biased toward low complexity. 4 consecutive RRM domains span residues 51–129 (ASLY…WSQR), 139–216 (GNVF…HHIS), 232–309 (TNIY…RAQK), and 335–465 (VNLY…LAQR). Disordered stretches follow at residues 365-420 (KVMR…KKSD) and 595-648 (RGGG…EEAP). Positions 366 to 420 (VMRDSTPAERTETPDSEKEKEVNKENEKKEDEEKAAEEKPKESDEEKKDETKKSD) are enriched in basic and acidic residues. Positions 610–633 (GMRGPGYQGRGGPQGGPRPQGGRG) are enriched in gly residues. The span at 634–648 (QNAAAQPAAGREEAP) shows a compositional bias: low complexity. The region spanning 649-726 (AGALTAQALN…ALSVYDEYMK (78 aa)) is the PABC domain. The interval 729–754 (GEGEAPADADKPKEAAKETATEENKS) is disordered.

This sequence belongs to the polyadenylate-binding protein type-1 family.

It is found in the cytoplasm. It localises to the nucleus. Functionally, binds the poly(A) tail of mRNA. Appears to be an important mediator of the multiple roles of the poly(A) tail in mRNA biogenesis, stability and translation. In the nucleus, involved in both mRNA cleavage and polyadenylation. Is also required for efficient mRNA export to the cytoplasm. Acts in concert with a poly(A)-specific nuclease (PAN) to affect poly(A) tail shortening, which may occur concomitantly with either nucleocytoplasmic mRNA transport or translational initiation. In the cytoplasm, stimulates translation initiation and regulates mRNA decay through translation termination-coupled poly(A) shortening, probably mediated by PAN. In Aspergillus clavatus (strain ATCC 1007 / CBS 513.65 / DSM 816 / NCTC 3887 / NRRL 1 / QM 1276 / 107), this protein is Polyadenylate-binding protein, cytoplasmic and nuclear (pab1).